The following is a 145-amino-acid chain: Plastocyanin, chloroplastic (145 aa).

The N-terminal 47 residues, 1-47, are a transit peptide targeting the chloroplast; the sequence is MKATLRAPASRASAVRPVASLKAAAQRVASVAGVSVASLALTLAAHA. Residues 48–145 form the Plastocyanin-like domain; the sequence is DATVKLGADS…AGMVGKIIVQ (98 aa). Cu cation contacts are provided by His-85, Cys-130, His-133, and Met-138.

Belongs to the plastocyanin family. Cu(2+) serves as cofactor.

The protein resides in the plastid. It is found in the chloroplast thylakoid membrane. In terms of biological role, participates in electron transfer between P700 and the cytochrome b6-f complex in photosystem I. The protein is Plastocyanin, chloroplastic (PETE) of Chlamydomonas reinhardtii (Chlamydomonas smithii).